The primary structure comprises 441 residues: MAASLSTVGAVNRTLLNLNGSGGGASGPSSAFFGTSLKKVISSRVPNSKLTSGSFKIVAADKEIEETQQTEGDRWRGLAYDVSDDQQDITRGKGLVDSLFQAPMDAGTHYAVISSHKYLSAGLRQYNFDNIKDGFYIAPAFLDKLVVHIAKNFMTLPNIKVPLILGVWGGKGQGKSFQCELVFAKMGINPIMMSAGELESGNAGEPAKLIRQRYREASDLIKKGKMCVLFINDLDAGAGRLGGTTQYTVNNQMVNATLMNIADNPTNVQLPGMYNKEDNARVPIIVTGNDFSTLYAPLIRDGRMEKFYWAPTREDRIGVCKGIFRTDGVPEKDIVELVDKHPGQSIDFFGALRARVYDDEVRKWISGVGVDSVGKKLVNSKEGPPTFDQPKMTLDKLLLYASMLVQEQENVKRVQLADQYLNEAALGNANEDAIKSGSFFK.

ATP is bound at residue 167 to 174 (VWGGKGQG).

It belongs to the RuBisCO activase family.

The protein resides in the plastid. It localises to the chloroplast stroma. Functionally, activation of RuBisCO (ribulose-1,5-bisphosphate carboxylase/oxygenase; EC 4.1.1.39) involves the ATP-dependent carboxylation of the epsilon-amino group of lysine leading to a carbamate structure. The protein is Ribulose bisphosphate carboxylase/oxygenase activase, chloroplastic (RCA1) of Phaseolus vulgaris (Kidney bean).